A 495-amino-acid polypeptide reads, in one-letter code: GTPase Der (495 aa).

2 EngA-type G domains span residues 3 to 166 (PVIA…MDAE) and 208 to 381 (IKLA…DCST). GTP contacts are provided by residues 9–16 (GRPNVGKS), 56–60 (DTGGI), 118–121 (NKTD), 214–221 (GRPNVGKS), 261–265 (DTAGV), and 326–329 (NKWD). The region spanning 382–466 (KRVGTSLLTR…PIRIQFKEGE (85 aa)) is the KH-like domain.

Belongs to the TRAFAC class TrmE-Era-EngA-EngB-Septin-like GTPase superfamily. EngA (Der) GTPase family. In terms of assembly, associates with the 50S ribosomal subunit.

In terms of biological role, GTPase that plays an essential role in the late steps of ribosome biogenesis. The protein is GTPase Der of Yersinia pseudotuberculosis serotype O:3 (strain YPIII).